A 61-amino-acid chain; its full sequence is Large ribosomal subunit protein uL30 (61 aa).

Belongs to the universal ribosomal protein uL30 family. As to quaternary structure, part of the 50S ribosomal subunit.

The chain is Large ribosomal subunit protein uL30 from Chlorobium phaeovibrioides (strain DSM 265 / 1930) (Prosthecochloris vibrioformis (strain DSM 265)).